A 66-amino-acid polypeptide reads, in one-letter code: Large ribosomal subunit protein uL29 (66 aa).

This sequence belongs to the universal ribosomal protein uL29 family.

The protein is Large ribosomal subunit protein uL29 (rpmC) of Helicobacter pylori (strain J99 / ATCC 700824) (Campylobacter pylori J99).